A 164-amino-acid chain; its full sequence is Transcription antitermination protein NusB (164 aa).

Belongs to the NusB family.

In terms of biological role, involved in transcription antitermination. Required for transcription of ribosomal RNA (rRNA) genes. Binds specifically to the boxA antiterminator sequence of the ribosomal RNA (rrn) operons. The polypeptide is Transcription antitermination protein NusB (Chlorobaculum parvum (strain DSM 263 / NCIMB 8327) (Chlorobium vibrioforme subsp. thiosulfatophilum)).